A 79-amino-acid chain; its full sequence is Small ribosomal subunit protein bS18 (79 aa).

Belongs to the bacterial ribosomal protein bS18 family. As to quaternary structure, part of the 30S ribosomal subunit. Forms a tight heterodimer with protein bS6.

In terms of biological role, binds as a heterodimer with protein bS6 to the central domain of the 16S rRNA, where it helps stabilize the platform of the 30S subunit. In Aster yellows witches'-broom phytoplasma (strain AYWB), this protein is Small ribosomal subunit protein bS18.